Here is a 108-residue protein sequence, read N- to C-terminus: DNA-binding protein HBbu (108 aa).

It belongs to the bacterial histone-like protein family.

In terms of biological role, histone-like DNA-binding protein which is capable of wrapping DNA to stabilize it, and thus to prevent its denaturation under extreme environmental conditions. The polypeptide is DNA-binding protein HBbu (hbb) (Borrelia andersonii (Borreliella andersonii)).